Consider the following 2250-residue polypeptide: DNA polymerase epsilon catalytic subunit A (2250 aa).

3 disordered regions span residues 1–63, 235–259, and 1990–2010; these read MPSR…GTAA, NGHG…DKEP, and PGTE…KAAS. Positions 32–41 are enriched in gly residues; sequence GGGGGGGGVA. The segment covering 249-259 has biased composition (basic and acidic residues); that stretch reads DDTKKKKDKEP. A compositionally biased stretch (polar residues) spans 1990-2000; the sequence is PGTEATSTMNP. Cysteine 2118, cysteine 2121, cysteine 2156, and cysteine 2159 together coordinate Zn(2+). The CysA-type zinc finger occupies 2118 to 2159; the sequence is CKKCNAIRDVDLCRDPDRLPSVNPDSGEMLEPARKNWVCHKC. Cysteine 2190, cysteine 2193, cysteine 2205, and cysteine 2207 together coordinate [4Fe-4S] cluster. The CysB motif motif lies at 2190–2207; the sequence is CLKCSQTKSDNLAATCKC.

It belongs to the DNA polymerase type-B family. As to quaternary structure, heterotetramer. Consists of 4 subunits: POL2, DPB2, DPB3 and DPB4. The cofactor is [4Fe-4S] cluster.

The protein resides in the nucleus. It catalyses the reaction DNA(n) + a 2'-deoxyribonucleoside 5'-triphosphate = DNA(n+1) + diphosphate. Functionally, DNA polymerase II participates in chromosomal DNA replication. The sequence is that of DNA polymerase epsilon catalytic subunit A (POL2) from Cryptococcus neoformans var. neoformans serotype D (strain JEC21 / ATCC MYA-565) (Filobasidiella neoformans).